The following is a 212-amino-acid chain: Pyrrolidone-carboxylate peptidase (212 aa).

Residues Glu80, Cys143, and His165 contribute to the active site.

The protein belongs to the peptidase C15 family. As to quaternary structure, homotetramer.

Its subcellular location is the cytoplasm. It catalyses the reaction Release of an N-terminal pyroglutamyl group from a polypeptide, the second amino acid generally not being Pro.. In terms of biological role, removes 5-oxoproline from various penultimate amino acid residues except L-proline. This Vibrio vulnificus (strain YJ016) protein is Pyrrolidone-carboxylate peptidase.